Consider the following 428-residue polypeptide: Enolase (428 aa).

Q163 lines the (2R)-2-phosphoglycerate pocket. E205 acts as the Proton donor in catalysis. Residues D243, E286, and D313 each contribute to the Mg(2+) site. The (2R)-2-phosphoglycerate site is built by K338, R367, S368, and K389. Residue K338 is the Proton acceptor of the active site.

This sequence belongs to the enolase family. The cofactor is Mg(2+).

Its subcellular location is the cytoplasm. It is found in the secreted. The protein localises to the cell surface. It carries out the reaction (2R)-2-phosphoglycerate = phosphoenolpyruvate + H2O. Its pathway is carbohydrate degradation; glycolysis; pyruvate from D-glyceraldehyde 3-phosphate: step 4/5. In terms of biological role, catalyzes the reversible conversion of 2-phosphoglycerate (2-PG) into phosphoenolpyruvate (PEP). It is essential for the degradation of carbohydrates via glycolysis. This is Enolase from Polaromonas naphthalenivorans (strain CJ2).